The chain runs to 275 residues: tRNA (guanine-N(1)-)-methyltransferase (275 aa).

S-adenosyl-L-methionine is bound by residues glycine 139 and 159–164 (IGDYIL).

The protein belongs to the RNA methyltransferase TrmD family. In terms of assembly, homodimer.

Its subcellular location is the cytoplasm. The catalysed reaction is guanosine(37) in tRNA + S-adenosyl-L-methionine = N(1)-methylguanosine(37) in tRNA + S-adenosyl-L-homocysteine + H(+). Its function is as follows. Specifically methylates guanosine-37 in various tRNAs. The protein is tRNA (guanine-N(1)-)-methyltransferase of Lachnoclostridium phytofermentans (strain ATCC 700394 / DSM 18823 / ISDg) (Clostridium phytofermentans).